Consider the following 448-residue polypeptide: Ribosome biogenesis protein YTM1 (448 aa).

Residues 5 to 86 form a ubiquitin-like (UBL) domain region; the sequence is TSNQAVVFST…EETLEIEYIE (82 aa). WD repeat units follow at residues 98-136, 191-230, 271-309, 312-351, 357-397, and 403-439; these read PHES…TLDA, LHTA…KHEV, SHIG…CTRT, ASEK…ALSA, LHPA…AAIS, and DGTK…ETQG. The interval 225–261 is disordered; that stretch reads PPKHEVPEPTITAADQRTKKRRKVDPSSGDSSSPTAI.

Belongs to the WD repeat WDR12/YTM1 family. Component of the NOP7 complex, composed of ERB1, NOP7 and YTM1. The complex is held together by ERB1, which interacts with NOP7 via its N-terminal domain and with YTM1 via a high-affinity interaction between the seven-bladed beta-propeller domains of the 2 proteins. The NOP7 complex associates with the 66S pre-ribosome. Interacts (via UBL domain) with MDN1 (via VWFA/MIDAS domain).

The protein localises to the nucleus. It is found in the nucleolus. The protein resides in the nucleoplasm. Functionally, component of the NOP7 complex, which is required for maturation of the 25S and 5.8S ribosomal RNAs and formation of the 60S ribosome. This chain is Ribosome biogenesis protein YTM1, found in Coprinopsis cinerea (strain Okayama-7 / 130 / ATCC MYA-4618 / FGSC 9003) (Inky cap fungus).